We begin with the raw amino-acid sequence, 248 residues long: MALDLAEYDRLARLGVAQFWDGRSSALENDEERSQGGERSGVLGGRNMDGFLAMIEGIVRKNGLPDAEVCIKGRPNLTLPGYYRPTKLWDVLVFDGKKLVAAVELKSHVGPSFGNNFNNRAEEAIGTAHDLATAIREGILGDQLPPFTGWLILVEDCEKSKRAVRDSSPHFPVFPDFKGASYLTRYEVLCRKLILKGFTPRPQSLLRPALRVLGATIASFRKPRVCAHLRHGWPAMYPVGQSRIRVNF.

The protein belongs to the XhoI type II restriction endonuclease family.

It carries out the reaction Endonucleolytic cleavage of DNA to give specific double-stranded fragments with terminal 5'-phosphates.. In terms of biological role, a P subtype restriction enzyme that recognizes the double-stranded sequence 5'-CTCGAG-3' and cleaves after C-1. The sequence is that of Type II restriction enzyme XhoI from Xanthomonas vasicola.